The following is a 509-amino-acid chain: Meiotic fizzy-related protein 2 (509 aa).

WD repeat units lie at residues Leu-159 to Glu-196, Pro-199 to Asp-238, His-242 to Val-281, Val-287 to Phe-326, Ile-329 to Ser-371, and Ile-437 to His-477.

The protein belongs to the WD repeat CDC20/Fizzy family.

The protein localises to the nucleus. Has a role in meiosis. The protein is Meiotic fizzy-related protein 2 (mfr2) of Schizosaccharomyces pombe (strain 972 / ATCC 24843) (Fission yeast).